The chain runs to 482 residues: Lipoamide acyltransferase component of branched-chain alpha-keto acid dehydrogenase complex, mitochondrial (482 aa).

Residues 1 to 61 (MAAALVLRTW…QWLKTTAALQ (61 aa)) constitute a mitochondrion transit peptide. One can recognise a Lipoyl-binding domain in the interval 64–139 (IVQFKLSDIG…YVGKPLVDIE (76 aa)). At K105 the chain carries N6-lipoyllysine. The residue at position 133 (K133) is an N6-succinyllysine. The segment at 145-160 (DSEEDVVETPAVSHDE) is critical for association with PPM1K. Residues 146–171 (SEEDVVETPAVSHDEHTHQEIKGQKT) are disordered. The span at 157 to 168 (SHDEHTHQEIKG) shows a compositional bias: basic and acidic residues. In terms of domain architecture, Peripheral subunit-binding (PSBD) spans 172–209 (LATPAVRRLAMENNIKLSEVIGSGKDGRILKEDILNYL). K196 is modified (N6-acetyllysine; alternate). An N6-succinyllysine; alternate modification is found at K196. N6-acetyllysine is present on K202. Residues 218–230 (PPSPKAEIMPPPP) show a composition bias toward pro residues. Residues 218 to 238 (PPSPKAEIMPPPPKPKDRTIP) form a disordered region. S220 carries the post-translational modification Phosphoserine. K243 and K250 each carry N6-acetyllysine. K261 is subject to N6-succinyllysine. At K289 the chain carries N6-acetyllysine; alternate. At K289 the chain carries N6-succinyllysine; alternate. Residue R291 participates in CoA binding. An N6-acetyllysine mark is found at K295 and K304. The CoA site is built by S306, D349, Q378, S399, N400, S403, G424, and I426. K435 carries the N6-acetyllysine modification. K440 carries the N6-acetyllysine; alternate modification. Residue K440 is modified to N6-succinyllysine; alternate. Catalysis depends on residues H452 and D456.

Belongs to the 2-oxoacid dehydrogenase family. In terms of assembly, forms a 24-polypeptide structural core with octahedral symmetry that represents the E2 component of the branched-chain alpha-ketoacid dehydrogenase (BCKDH) complex. The BCKDH complex is composed of three major building blocks E1, E2 and E3. It is organized around E2, a 24-meric cubic core composed of DBT, to which are associated 6 to 12 copies of E1, and approximately 6 copies of the dehydrogenase E3, a DLD dimer. Interacts with PPM1K with a 24:1 stoichiometry; the N-terminal region (residues 49-61) of PPM1K and C-terminal linker of the lipoyl domain of DBT/E2 (residues 145-160) are critical for this interaction whereas the lipoyl prosthetic group is dispensable. This interaction requires colocalization in mitochondria. PPM1K competes with BCKDK for binding to DBT; this interaction is modulated by branched-chain alpha-keto acids (BCKAs). At steady state, BCKDH holoenzyme preferentially binds BCKDK and BCKDHA is phosphorylated. In response to high levels of BCKAs, BCKDK is replaced by PPM1K leading to BCKDHA dephosphorylation. (R)-lipoate is required as a cofactor. In terms of tissue distribution, expressed in kidney (at protein level).

It localises to the mitochondrion matrix. It carries out the reaction N(6)-[(R)-dihydrolipoyl]-L-lysyl-[protein] + 2-methylpropanoyl-CoA = N(6)-[(R)-S(8)-2-methylpropanoyldihydrolipoyl]-L-lysyl-[protein] + CoA. The branched-chain alpha-keto dehydrogenase complex catalyzes the overall conversion of alpha-keto acids to acyl-CoA and CO(2). It contains multiple copies of three enzymatic components: branched-chain alpha-keto acid decarboxylase (E1), lipoamide acyltransferase (E2) and lipoamide dehydrogenase (E3). Within this complex, the catalytic function of this enzyme is to accept, and to transfer to coenzyme A, acyl groups that are generated by the branched-chain alpha-keto acid decarboxylase component. The sequence is that of Lipoamide acyltransferase component of branched-chain alpha-keto acid dehydrogenase complex, mitochondrial (DBT) from Bos taurus (Bovine).